We begin with the raw amino-acid sequence, 116 residues long: Integration host factor subunit alpha (116 aa).

Disordered stretches follow at residues 58 to 80 (FGNF…GETI) and 94 to 116 (QKLK…EAAE). Residues 94 to 105 (QKLKSTVEQSGN) show a composition bias toward polar residues.

It belongs to the bacterial histone-like protein family. Heterodimer of an alpha and a beta chain.

Functionally, this protein is one of the two subunits of integration host factor, a specific DNA-binding protein that functions in genetic recombination as well as in transcriptional and translational control. The polypeptide is Integration host factor subunit alpha (Bordetella avium (strain 197N)).